A 180-amino-acid chain; its full sequence is Ribulose bisphosphate carboxylase small subunit, chloroplastic 4 (180 aa).

The N-terminal 56 residues, 1–56, are a transit peptide targeting the chloroplast; sequence MASSIVSSAAVATRGNGAQASMVAPFTGLKSTASFPVSRKQNLDITSIASNGGRVS.

Belongs to the RuBisCO small chain family. As to quaternary structure, heterohexadecamer of 8 large and 8 small subunits. (Microbial infection) Binds to tobamovirus movement protein; this interaction seems required for viral systemic movement.

The protein localises to the plastid. It localises to the chloroplast. It is found in the cell junction. Its subcellular location is the plasmodesma. Its function is as follows. RuBisCO catalyzes two reactions: the carboxylation of D-ribulose 1,5-bisphosphate, the primary event in carbon dioxide fixation, as well as the oxidative fragmentation of the pentose substrate. Both reactions occur simultaneously and in competition at the same active site. Although the small subunit is not catalytic it is essential for maximal activity. Involved in antiviral defenses. This chain is Ribulose bisphosphate carboxylase small subunit, chloroplastic 4, found in Solanum lycopersicum (Tomato).